Consider the following 305-residue polypeptide: Cytochrome c biogenesis protein CcsA (305 aa).

A run of 8 helical transmembrane segments spans residues 4-24 (VLGL…LAFW), 32-52 (SGLV…QLVL), 58-78 (GHFP…ACTL), 91-111 (IVAA…SFAL), 136-156 (VIMV…AVLV), 212-232 (TITV…VWAN), 246-263 (TWAL…HTRL), and 275-295 (VASA…LLGI).

The protein belongs to the CcmF/CycK/Ccl1/NrfE/CcsA family. In terms of assembly, may interact with ccs1.

The protein localises to the cellular thylakoid membrane. Its function is as follows. Required during biogenesis of c-type cytochromes (cytochrome c6 and cytochrome f) at the step of heme attachment. In Synechococcus sp. (strain CC9311), this protein is Cytochrome c biogenesis protein CcsA.